The following is a 256-amino-acid chain: Triosephosphate isomerase (256 aa).

A substrate-binding site is contributed by N9–K11. H96 serves as the catalytic Electrophile. Catalysis depends on E168, which acts as the Proton acceptor. Substrate is bound by residues S213 and G234–G235.

It belongs to the triosephosphate isomerase family. As to quaternary structure, homodimer.

The protein localises to the cytoplasm. It carries out the reaction D-glyceraldehyde 3-phosphate = dihydroxyacetone phosphate. Its pathway is carbohydrate biosynthesis; gluconeogenesis. It functions in the pathway carbohydrate degradation; glycolysis; D-glyceraldehyde 3-phosphate from glycerone phosphate: step 1/1. Functionally, involved in the gluconeogenesis. Catalyzes stereospecifically the conversion of dihydroxyacetone phosphate (DHAP) to D-glyceraldehyde-3-phosphate (G3P). The protein is Triosephosphate isomerase of Baumannia cicadellinicola subsp. Homalodisca coagulata.